The chain runs to 201 residues: Superoxide dismutase [Mn] (201 aa).

Residues H27, H81, D163, and H167 each coordinate Mn(2+).

This sequence belongs to the iron/manganese superoxide dismutase family. Homodimer. Requires Mn(2+) as cofactor.

The enzyme catalyses 2 superoxide + 2 H(+) = H2O2 + O2. Destroys superoxide anion radicals which are normally produced within the cells and which are toxic to biological systems. May play a critical role against oxidative stress, affecting both the survival and the virulence of S.pneumoniae. This Streptococcus pneumoniae serotype 4 (strain ATCC BAA-334 / TIGR4) protein is Superoxide dismutase [Mn] (sodA).